The sequence spans 310 residues: Isoflavone reductase homolog A622 (310 aa).

NADP(+) is bound by residues 13 to 19 (GGTGYIG), Arg38, and Lys47. The active-site Proton acceptor is Lys135. NADP(+) is bound at residue Arg139.

The protein belongs to the NmrA-type oxidoreductase family. Isoflavone reductase subfamily. As to quaternary structure, monomer. In terms of tissue distribution, expressed in roots and stems.

The protein resides in the cytoplasm. Its pathway is alkaloid biosynthesis; nicotine biosynthesis. Functionally, NADPH-binding protein. Involved in the biosynthesis of pyridine alkaloid natural products, leading mainly to the production of anabasine, anatabine, nicotine and nornicotine, effective deterrents against herbivores with antiparasitic and pesticide properties (neurotoxins); nornicotine serves as the precursor in the synthesis of the carcinogen compound N'-nitrosonornicotine (NNN). Reductase involved in a late step of tobacco alkaloid biosynthesis. Triggers either the formation of a nicotinic acid-derived precursor or the final condensation reaction of tobacco alkaloids. This chain is Isoflavone reductase homolog A622, found in Nicotiana sylvestris (Wood tobacco).